The chain runs to 550 residues: MRVAVAGCCHGELDKIYETLALAERRGSGPVDLLLCCGDFQAVRNEADLRCMAVPPKYRHMQTFYRYYSGEKKAPVLTIFIGGNHEASNHLQELPYGGWVAPNIYYLGLAGVVKYRGVRIGGISGIFKSHDYRKGHFECPPYNSSTIRSIYHVRNIEVYKLKQLKQPVHIFLSHDWPRNIYHYGNKKQLLKTKSFFRQEVENSTLGSPAASELLEHLQPAYWFSAHLHVKFAALMQHQATDKDQAGKETKFLALDKCLPHRDFLQVLEIEHDPSAPEYLEYDVEWLTVLRATDDLINVTGGLWNMPEDNGLHTRWDYSATEETMKEVMEKLNHDPKVPCNFTMTAACYDPSKPQTQVKLVHRINPQTTEFCAQLGITDINVMIQKAREEEHHQCGEYEQQGDPGTEESEEDRSEYNTDTSALSSINPDEIMLDEEEEEEEEEEEAVSAHSDMNTPSVEPASDQASDLSTSFSDIRNLPSSMFVSSDDASRSPASGEGKCGETVESGDEKDLAKFPLKRLSDEHEPEQRKKIKRRNQAIYAAVDDGDASAE.

The a divalent metal cation site is built by cysteine 8 and histidine 10. Phosphoserine is present on serine 28. 2 residues coordinate a divalent metal cation: aspartate 39 and asparagine 84. Positions 124-154 (SGIFKSHDYRKGHFECPPYNSSTIRSIYHVR) are lariat recognition loop. Lysine 128 is subject to N6-acetyllysine. The a divalent metal cation site is built by histidine 174, histidine 226, and histidine 228. A disordered region spans residues 390 to 550 (EHHQCGEYEQ…AVDDGDASAE (161 aa)). The segment covering 416–426 (NTDTSALSSIN) has biased composition (polar residues). Over residues 430–445 (IMLDEEEEEEEEEEEA) the composition is skewed to acidic residues. Residues 450 to 483 (SDMNTPSVEPASDQASDLSTSFSDIRNLPSSMFV) are compositionally biased toward polar residues. A phosphoserine mark is found at serine 470, serine 480, serine 484, serine 485, serine 489, serine 491, serine 494, serine 505, and serine 520. A compositionally biased stretch (basic and acidic residues) spans 498 to 528 (KCGETVESGDEKDLAKFPLKRLSDEHEPEQR).

This sequence belongs to the lariat debranching enzyme family. It depends on Fe(2+) as a cofactor. The cofactor is Zn(2+). Mn(2+) is required as a cofactor.

Its subcellular location is the nucleus. Active in presence of diverse metals including Fe(2+), Zn(2+), Mn(2+). Also activated by Ca(2+). Binds two metal cations in two adjacent alpha and beta metal-binding pockets. In terms of biological role, cleaves the 2'-5' phosphodiester linkage at the branch point of excised lariat intron RNA and converts them into linear molecules that can be subsequently degraded, thereby facilitating ribonucleotide turnover. Linked to its role in pre-mRNA processing mechanism, may also participate in retrovirus replication and have an antiviral cell-intrinsic defense function. The protein is Lariat debranching enzyme (Dbr1) of Mus musculus (Mouse).